The following is an 811-amino-acid chain: Lysine-specific histone demethylase 1 homolog 3 (811 aa).

A compositionally biased stretch (pro residues) spans Met-1–Pro-10. The interval Met-1–Ser-79 is disordered. The span at Asn-44 to Leu-55 shows a compositional bias: basic residues. Positions Pro-56 to Ser-71 are enriched in low complexity. The SWIRM domain maps to Asn-88–Arg-189. The FAD site is built by Glu-227, Arg-229, Arg-235, and Glu-609. The disordered stretch occupies residues Arg-790–Ser-811.

The protein belongs to the flavin monoamine oxidase family. It depends on FAD as a cofactor.

In terms of biological role, probable histone demethylase. This is Lysine-specific histone demethylase 1 homolog 3 from Oryza sativa subsp. japonica (Rice).